The chain runs to 244 residues: Biosynthetic peptidoglycan transglycosylase (244 aa).

A helical membrane pass occupies residues 25–45 (LLLLLTAALLYQSWFLLHIVY).

The protein belongs to the glycosyltransferase 51 family.

It localises to the cell inner membrane. It carries out the reaction [GlcNAc-(1-&gt;4)-Mur2Ac(oyl-L-Ala-gamma-D-Glu-L-Lys-D-Ala-D-Ala)](n)-di-trans,octa-cis-undecaprenyl diphosphate + beta-D-GlcNAc-(1-&gt;4)-Mur2Ac(oyl-L-Ala-gamma-D-Glu-L-Lys-D-Ala-D-Ala)-di-trans,octa-cis-undecaprenyl diphosphate = [GlcNAc-(1-&gt;4)-Mur2Ac(oyl-L-Ala-gamma-D-Glu-L-Lys-D-Ala-D-Ala)](n+1)-di-trans,octa-cis-undecaprenyl diphosphate + di-trans,octa-cis-undecaprenyl diphosphate + H(+). The protein operates within cell wall biogenesis; peptidoglycan biosynthesis. Peptidoglycan polymerase that catalyzes glycan chain elongation from lipid-linked precursors. This is Biosynthetic peptidoglycan transglycosylase from Nitrosomonas europaea (strain ATCC 19718 / CIP 103999 / KCTC 2705 / NBRC 14298).